Reading from the N-terminus, the 640-residue chain is Chaperone protein DnaK (640 aa).

The residue at position 198 (Thr198) is a Phosphothreonine; by autocatalysis. The interval 600–640 (KTQGAGAEGGEQPHGEQEAGGAAKGEKVVDADFEEVKDDKK) is disordered. Acidic residues predominate over residues 630 to 640 (ADFEEVKDDKK).

This sequence belongs to the heat shock protein 70 family.

Acts as a chaperone. This chain is Chaperone protein DnaK, found in Citrifermentans bemidjiense (strain ATCC BAA-1014 / DSM 16622 / JCM 12645 / Bem) (Geobacter bemidjiensis).